Here is a 97-residue protein sequence, read N- to C-terminus: Co-chaperonin GroES (97 aa).

The protein belongs to the GroES chaperonin family. Heptamer of 7 subunits arranged in a ring. Interacts with the chaperonin GroEL.

Its subcellular location is the cytoplasm. Together with the chaperonin GroEL, plays an essential role in assisting protein folding. The GroEL-GroES system forms a nano-cage that allows encapsulation of the non-native substrate proteins and provides a physical environment optimized to promote and accelerate protein folding. GroES binds to the apical surface of the GroEL ring, thereby capping the opening of the GroEL channel. The polypeptide is Co-chaperonin GroES (Stutzerimonas stutzeri (strain A1501) (Pseudomonas stutzeri)).